The chain runs to 504 residues: ATP synthase subunit alpha (504 aa).

170–177 is a binding site for ATP; it reads GDRQTGKT.

The protein belongs to the ATPase alpha/beta chains family. In terms of assembly, F-type ATPases have 2 components, CF(1) - the catalytic core - and CF(0) - the membrane proton channel. CF(1) has five subunits: alpha(3), beta(3), gamma(1), delta(1), epsilon(1). CF(0) has four main subunits: a(1), b(1), b'(1) and c(9-12).

It is found in the cellular thylakoid membrane. It carries out the reaction ATP + H2O + 4 H(+)(in) = ADP + phosphate + 5 H(+)(out). Produces ATP from ADP in the presence of a proton gradient across the membrane. The alpha chain is a regulatory subunit. This Prochlorococcus marinus (strain NATL2A) protein is ATP synthase subunit alpha.